The following is a 1525-amino-acid chain: Dicer-like protein 1 (1525 aa).

Positions 37–52 (DLQEDDGSSDESDNDE) are enriched in acidic residues. A disordered region spans residues 37-65 (DLQEDDGSSDESDNDEREDHSKTGVSQQR). The region spanning 124–305 (LFERAKVQNT…DEATRLEKLL (182 aa)) is the Helicase ATP-binding domain. 137–144 (LDTGSGKT) contributes to the ATP binding site. The DEAH box motif lies at 250-253 (DEAH). The Helicase C-terminal domain occupies 439–605 (QLSPKVQVLR…SFCRTLPEDR (167 aa)). The region spanning 641-731 (ATAILARYAS…NSIYHRRLPA (91 aa)) is the Dicer dsRNA-binding fold domain. Residues 881–1009 (ESLTYVRDND…ICIEPLKVSA (129 aa)) enclose the PAZ domain. RNase III domains follow at residues 1032 to 1192 (LISL…LSGG) and 1243 to 1394 (SRKI…VDSD). Residues Glu-1283, Asp-1380, and Glu-1383 each contribute to the Mg(2+) site. One can recognise a DRBM domain in the interval 1428–1496 (TFLHNRLTNE…SEKALAVLDE (69 aa)). Cys-1440, His-1467, Cys-1508, and Cys-1510 together coordinate Zn(2+).

The protein belongs to the helicase family. Dicer subfamily. The cofactor is Mg(2+). It depends on Mn(2+) as a cofactor.

Its function is as follows. Dicer-like endonuclease involved in cleaving double-stranded RNA in the RNA interference (RNAi) pathway. Produces 21 to 25 bp dsRNAs (siRNAs) which target the selective destruction of homologous RNAs leading to sequence-specific suppression of gene expression, called post-transcriptional gene silencing (PTGS). Part of a broad host defense response against viral infection and transposons. In Aspergillus niger (strain ATCC MYA-4892 / CBS 513.88 / FGSC A1513), this protein is Dicer-like protein 1 (dcl1).